We begin with the raw amino-acid sequence, 620 residues long: Carotenoid isomerooxygenase (620 aa).

3 residues coordinate Fe cation: His-211, His-267, and His-337. The interval 440 to 459 (NGKQATAGEESPKRDAKRGR) is disordered. A compositionally biased stretch (basic and acidic residues) spans 449–459 (ESPKRDAKRGR). His-612 is a Fe cation binding site.

This sequence belongs to the carotenoid oxygenase family. Fe(2+) serves as cofactor. Expression follows organogenesis of the larval Bolwig's organ (BO), which mediates larval photophobic behavior. In the adult, expression is restricted exclusively to the brain. Expressed in both neuronal cells and glia cells. Not active within photoreceptors. Active within neuronal cells within the central nervous system.

The enzyme catalyses all-trans-zeaxanthin + O2 = (3R)-11-cis-3-hydroxyretinal + (3R)-all-trans-3-hydroxyretinal. It functions in the pathway cofactor metabolism; retinol metabolism. Its function is as follows. Catalyzes the oxidative cleavage at the 15,15'-double bond of carotenoids and the simultaneous all-trans to 11-cis isomerization of one cleavage product. Carotenoids like 11-cis retinal can promote visual pigment biogenesis in the dark. Essential for the biosynthesis of the 3-hydroxyretinal chromophore of rhodopsin from zeaxanthin and for proper photoreceptor development. Also essential for larval light perception. The sequence is that of Carotenoid isomerooxygenase (ninaB) from Drosophila melanogaster (Fruit fly).